A 295-amino-acid polypeptide reads, in one-letter code: Lectin 11 (295 aa).

The Cytoplasmic portion of the chain corresponds to 1–22; sequence MHYSHFYFIINNTNMTINAIPK. The helical transmembrane segment at 23-45 threads the bilayer; it reads LFATKNSISLSIVIFMYLLILVA. Topologically, residues 46 to 295 are extracellular; sequence NVKSDSSFNF…ILSWSFTSNM (250 aa). The N-linked (GlcNAc...) asparagine glycan is linked to Asn-152.

Belongs to the leguminous lectin family.

Its subcellular location is the membrane. Its function is as follows. May be involved in arbuscular mycorrhizal (AM) symbiosis with AM fungi. The chain is Lectin 11 from Medicago truncatula (Barrel medic).